The primary structure comprises 484 residues: Glutamate--tRNA ligase (484 aa).

The short motif at 11-21 (PSPTGYLHIGN) is the 'HIGH' region element. The short motif at 252–256 (KLSKR) is the 'KMSKS' region element. Residue Lys-255 participates in ATP binding.

This sequence belongs to the class-I aminoacyl-tRNA synthetase family. Glutamate--tRNA ligase type 1 subfamily. In terms of assembly, monomer.

It is found in the cytoplasm. The catalysed reaction is tRNA(Glu) + L-glutamate + ATP = L-glutamyl-tRNA(Glu) + AMP + diphosphate. Catalyzes the attachment of glutamate to tRNA(Glu) in a two-step reaction: glutamate is first activated by ATP to form Glu-AMP and then transferred to the acceptor end of tRNA(Glu). This Staphylococcus aureus (strain MRSA252) protein is Glutamate--tRNA ligase.